A 447-amino-acid polypeptide reads, in one-letter code: Rab GDP dissociation inhibitor alpha (447 aa).

The residue at position 427 (Ser-427) is a Phosphoserine.

Belongs to the Rab GDI family. As to quaternary structure, interacts with RHOH. Interacts with the non-phosphorylated forms of RAB1A, RAB3A, RAB5A, RAB5B, RAB5C, RAB8A, RAB8B, RAB12, RAB35, and RAB43. Interacts with RAB10. High expression in brain, lower in other tissues.

It localises to the cytoplasm. The protein localises to the golgi apparatus. It is found in the trans-Golgi network. In terms of biological role, regulates the GDP/GTP exchange reaction of most Rab proteins by inhibiting the dissociation of GDP from them, and the subsequent binding of GTP to them. Promotes the dissociation of GDP-bound Rab proteins from the membrane and inhibits their activation. Promotes the dissociation of RAB1A, RAB3A, RAB5A and RAB10 from membranes. The chain is Rab GDP dissociation inhibitor alpha (Gdi1) from Mus musculus (Mouse).